The primary structure comprises 139 residues: D-ribose pyranase (139 aa).

The active-site Proton donor is the His20. Residues Asp28, His106, and 128–130 (YAN) contribute to the substrate site.

Belongs to the RbsD / FucU family. RbsD subfamily. Homodecamer.

The protein localises to the cytoplasm. The catalysed reaction is beta-D-ribopyranose = beta-D-ribofuranose. The protein operates within carbohydrate metabolism; D-ribose degradation; D-ribose 5-phosphate from beta-D-ribopyranose: step 1/2. Catalyzes the interconversion of beta-pyran and beta-furan forms of D-ribose. The polypeptide is D-ribose pyranase (Aliivibrio salmonicida (strain LFI1238) (Vibrio salmonicida (strain LFI1238))).